We begin with the raw amino-acid sequence, 392 residues long: Probable protein phosphatase 2C 78 (392 aa).

One can recognise a PPM-type phosphatase domain in the interval 39-342; the sequence is ASGEYSIAVA…DDITVVVVYL (304 aa). Residues Asp73, Gly74, Asp274, and Asp333 each contribute to the Mn(2+) site.

Belongs to the PP2C family. Mg(2+) serves as cofactor. It depends on Mn(2+) as a cofactor.

The enzyme catalyses O-phospho-L-seryl-[protein] + H2O = L-seryl-[protein] + phosphate. It catalyses the reaction O-phospho-L-threonyl-[protein] + H2O = L-threonyl-[protein] + phosphate. This is Probable protein phosphatase 2C 78 from Oryza sativa subsp. japonica (Rice).